A 68-amino-acid polypeptide reads, in one-letter code: UPF0435 protein SAB1812c (68 aa).

The protein belongs to the UPF0435 family.

This chain is UPF0435 protein SAB1812c, found in Staphylococcus aureus (strain bovine RF122 / ET3-1).